The chain runs to 320 residues: L-lactate dehydrogenase 1 (320 aa).

NAD(+) is bound by residues Val18, Asp39, Arg44, Tyr69, and 83–84; that span reads GA. Gln86 and Arg92 together coordinate substrate. Residues Ser105, 122-124, and Ser147 contribute to the NAD(+) site; that span reads AAN. Residue 124–127 coordinates substrate; that stretch reads NPVD. 152–155 contacts substrate; that stretch reads DSSR. Catalysis depends on His179, which acts as the Proton acceptor. Phosphotyrosine is present on Tyr223. A substrate-binding site is contributed by Thr232.

This sequence belongs to the LDH/MDH superfamily. LDH family. In terms of assembly, homotetramer.

Its subcellular location is the cytoplasm. It catalyses the reaction (S)-lactate + NAD(+) = pyruvate + NADH + H(+). It functions in the pathway fermentation; pyruvate fermentation to lactate; (S)-lactate from pyruvate: step 1/1. In terms of biological role, catalyzes the conversion of lactate to pyruvate. The protein is L-lactate dehydrogenase 1 of Lactiplantibacillus plantarum (strain ATCC BAA-793 / NCIMB 8826 / WCFS1) (Lactobacillus plantarum).